Here is a 572-residue protein sequence, read N- to C-terminus: Arginine--tRNA ligase (572 aa).

The short motif at 122 to 132 (PNLAKEMHVGH) is the 'HIGH' region element.

Belongs to the class-I aminoacyl-tRNA synthetase family. Monomer.

The protein localises to the cytoplasm. The catalysed reaction is tRNA(Arg) + L-arginine + ATP = L-arginyl-tRNA(Arg) + AMP + diphosphate. The sequence is that of Arginine--tRNA ligase from Neisseria gonorrhoeae (strain NCCP11945).